Consider the following 91-residue polypeptide: Class I hydrophobin E (91 aa).

Residues 1-16 form the signal peptide; it reads MKFSIAAIALAAVAVA. 4 disulfides stabilise this stretch: C30-C72, C42-C64, C43-C55, and C73-C89. The N-linked (GlcNAc...) asparagine glycan is linked to N83.

Belongs to the fungal hydrophobin family.

It is found in the secreted. It localises to the cell wall. The protein localises to the vacuole. Its subcellular location is the cytoplasmic vesicle. Functionally, aerial growth, conidiation, and dispersal of filamentous fungi in the environment rely upon a capability of their secreting small amphipathic proteins called hydrophobins (HPBs) with low sequence identity. Class I can self-assemble into an outermost layer of rodlet bundles on aerial cell surfaces, conferring cellular hydrophobicity that supports fungal growth, development and dispersal; whereas Class II form highly ordered films at water-air interfaces through intermolecular interactions but contribute nothing to the rodlet structure. Hyd1E contributes to certain cell wall-related features, such as hydrophobicity but is not involved in cell wall-related events during fungal proliferation in host hemocoel. Does not contribute to conidial hydrophobicity. This chain is Class I hydrophobin E, found in Beauveria bassiana (strain ARSEF 2860) (White muscardine disease fungus).